The following is a 302-amino-acid chain: Putative gluconeogenesis factor (302 aa).

The protein belongs to the gluconeogenesis factor family.

Its subcellular location is the cytoplasm. Required for morphogenesis under gluconeogenic growth conditions. The protein is Putative gluconeogenesis factor (ybhK) of Escherichia coli O157:H7.